Consider the following 413-residue polypeptide: MKCSWREGNKIQLLENGEQYYPAVFKAIGEAQERIILETFIWFEDDVGKQLHAALLAAAQRGVKAEVLLDGYGSPDLSDEFVNELTAAGVVFRYYDPRPRLFGMRTNVFRRMHRKIVVIDARIAFIGGLNYSAEHMSSYGPEAKQDYAVRLEGPIVEDILQFELENLPGQSAARRWWRRHHKAEENRQPGEAQVLLVWRDNEEHRDDIERHYLKMLTQARREVIIANAYFFPGYRFLHALRKAARRGVRIKLIIQGEPDMPIVRVGARLLYNYLVKGGVQVFEYRRRPLHGKVALMDDHWATVGSSNLDPLSLSLNLEANVIIHDRHFNQTLRDNLNGIIAADCQQVDETMLPKRTWWNLTKSVLAFHFLRHFPALVGWLPAHTPRLAQVDPPAQPTMETQDRVETENTGVKP.

2 PLD phosphodiesterase domains span residues 108–135 and 285–312; these read VFRR…SAEH and RRRP…DPLS. Catalysis depends on residues H113, K115, D120, H290, K292, and D297. The disordered stretch occupies residues 390–413; that stretch reads VDPPAQPTMETQDRVETENTGVKP.

The protein belongs to the phospholipase D family. Cardiolipin synthase subfamily. ClsB sub-subfamily.

It localises to the cell membrane. It catalyses the reaction 2 a 1,2-diacyl-sn-glycero-3-phospho-(1'-sn-glycerol) = a cardiolipin + glycerol. In terms of biological role, catalyzes the phosphatidyl group transfer from one phosphatidylglycerol molecule to another to form cardiolipin (CL) (diphosphatidylglycerol) and glycerol. This Escherichia coli O157:H7 protein is Cardiolipin synthase B.